Consider the following 412-residue polypeptide: Chorismate synthase (412 aa).

NADP(+) is bound by residues Arg-40 and Arg-46. FMN-binding positions include 135 to 137, 256 to 257, Gly-300, 315 to 319, and Arg-341; these read RAS, QA, and KPIST. The span at 391 to 404 shows a compositional bias: basic and acidic residues; the sequence is QREPRQESSDEQPA. The segment at 391-412 is disordered; the sequence is QREPRQESSDEQPARRAANTAG.

It belongs to the chorismate synthase family. In terms of assembly, homotetramer. Requires FMNH2 as cofactor.

It carries out the reaction 5-O-(1-carboxyvinyl)-3-phosphoshikimate = chorismate + phosphate. It functions in the pathway metabolic intermediate biosynthesis; chorismate biosynthesis; chorismate from D-erythrose 4-phosphate and phosphoenolpyruvate: step 7/7. Catalyzes the anti-1,4-elimination of the C-3 phosphate and the C-6 proR hydrogen from 5-enolpyruvylshikimate-3-phosphate (EPSP) to yield chorismate, which is the branch point compound that serves as the starting substrate for the three terminal pathways of aromatic amino acid biosynthesis. This reaction introduces a second double bond into the aromatic ring system. The polypeptide is Chorismate synthase (Mycobacteroides abscessus (strain ATCC 19977 / DSM 44196 / CCUG 20993 / CIP 104536 / JCM 13569 / NCTC 13031 / TMC 1543 / L948) (Mycobacterium abscessus)).